The sequence spans 254 residues: Phosphoribosylaminoimidazole-succinocarboxamide synthase (254 aa).

This sequence belongs to the SAICAR synthetase family.

It carries out the reaction 5-amino-1-(5-phospho-D-ribosyl)imidazole-4-carboxylate + L-aspartate + ATP = (2S)-2-[5-amino-1-(5-phospho-beta-D-ribosyl)imidazole-4-carboxamido]succinate + ADP + phosphate + 2 H(+). The protein operates within purine metabolism; IMP biosynthesis via de novo pathway; 5-amino-1-(5-phospho-D-ribosyl)imidazole-4-carboxamide from 5-amino-1-(5-phospho-D-ribosyl)imidazole-4-carboxylate: step 1/2. This is Phosphoribosylaminoimidazole-succinocarboxamide synthase from Bartonella henselae (strain ATCC 49882 / DSM 28221 / CCUG 30454 / Houston 1) (Rochalimaea henselae).